The sequence spans 476 residues: Glycogen synthase (476 aa).

Position 15 (lysine 15) interacts with ADP-alpha-D-glucose.

Belongs to the glycosyltransferase 1 family. Bacterial/plant glycogen synthase subfamily.

The enzyme catalyses [(1-&gt;4)-alpha-D-glucosyl](n) + ADP-alpha-D-glucose = [(1-&gt;4)-alpha-D-glucosyl](n+1) + ADP + H(+). It participates in glycan biosynthesis; glycogen biosynthesis. Its function is as follows. Synthesizes alpha-1,4-glucan chains using ADP-glucose. This chain is Glycogen synthase, found in Streptococcus mutans serotype c (strain ATCC 700610 / UA159).